A 398-amino-acid polypeptide reads, in one-letter code: Succinate--CoA ligase [ADP-forming] subunit beta (398 aa).

One can recognise an ATP-grasp domain in the interval K9–E254. ATP is bound by residues K46, G53–G55, E109, S112, and E117. N209 and D223 together coordinate Mg(2+). Residues N274 and G331–M333 each bind substrate.

It belongs to the succinate/malate CoA ligase beta subunit family. As to quaternary structure, heterotetramer of two alpha and two beta subunits. The cofactor is Mg(2+).

It catalyses the reaction succinate + ATP + CoA = succinyl-CoA + ADP + phosphate. The catalysed reaction is GTP + succinate + CoA = succinyl-CoA + GDP + phosphate. Its pathway is carbohydrate metabolism; tricarboxylic acid cycle; succinate from succinyl-CoA (ligase route): step 1/1. In terms of biological role, succinyl-CoA synthetase functions in the citric acid cycle (TCA), coupling the hydrolysis of succinyl-CoA to the synthesis of either ATP or GTP and thus represents the only step of substrate-level phosphorylation in the TCA. The beta subunit provides nucleotide specificity of the enzyme and binds the substrate succinate, while the binding sites for coenzyme A and phosphate are found in the alpha subunit. This is Succinate--CoA ligase [ADP-forming] subunit beta from Bradyrhizobium diazoefficiens (strain JCM 10833 / BCRC 13528 / IAM 13628 / NBRC 14792 / USDA 110).